The following is a 156-amino-acid chain: ATP synthase subunit b (156 aa).

Residues 11–31 form a helical membrane-spanning segment; that stretch reads AIAFILFVWFCMKYVWPPLMA.

The protein belongs to the ATPase B chain family. As to quaternary structure, F-type ATPases have 2 components, F(1) - the catalytic core - and F(0) - the membrane proton channel. F(1) has five subunits: alpha(3), beta(3), gamma(1), delta(1), epsilon(1). F(0) has three main subunits: a(1), b(2) and c(10-14). The alpha and beta chains form an alternating ring which encloses part of the gamma chain. F(1) is attached to F(0) by a central stalk formed by the gamma and epsilon chains, while a peripheral stalk is formed by the delta and b chains.

It localises to the cell inner membrane. Functionally, f(1)F(0) ATP synthase produces ATP from ADP in the presence of a proton or sodium gradient. F-type ATPases consist of two structural domains, F(1) containing the extramembraneous catalytic core and F(0) containing the membrane proton channel, linked together by a central stalk and a peripheral stalk. During catalysis, ATP synthesis in the catalytic domain of F(1) is coupled via a rotary mechanism of the central stalk subunits to proton translocation. In terms of biological role, component of the F(0) channel, it forms part of the peripheral stalk, linking F(1) to F(0). The sequence is that of ATP synthase subunit b from Salmonella agona (strain SL483).